Reading from the N-terminus, the 381-residue chain is Dynactin subunit 2 (381 aa).

A disordered region spans residues 15 to 39 (DQPDVYETPDAPESETSDFYDEEPA). Acidic residues predominate over residues 24–39 (DAPESETSDFYDEEPA). 2 coiled-coil regions span residues 100-216 (QKCL…AVGA) and 350-381 (GVQEAFAQNLENVNKEVKKLDERMKTLQEKVK).

Belongs to the dynactin subunit 2 family. In terms of assembly, subunit of dynactin, a multiprotein complex associated with dynein.

The protein resides in the cytoplasm. Its subcellular location is the cytoskeleton. The protein localises to the membrane. Its function is as follows. Modulates cytoplasmic dynein binding to an organelle, and plays a role in prometaphase chromosome alignment and spindle organization during mitosis. The polypeptide is Dynactin subunit 2 (Aedes aegypti (Yellowfever mosquito)).